The primary structure comprises 445 residues: Phosphoglucosamine mutase (445 aa).

Serine 101 acts as the Phosphoserine intermediate in catalysis. Residues serine 101, aspartate 240, aspartate 242, and aspartate 244 each contribute to the Mg(2+) site. Position 101 is a phosphoserine (serine 101).

It belongs to the phosphohexose mutase family. The cofactor is Mg(2+). Post-translationally, activated by phosphorylation.

The catalysed reaction is alpha-D-glucosamine 1-phosphate = D-glucosamine 6-phosphate. Its function is as follows. Catalyzes the conversion of glucosamine-6-phosphate to glucosamine-1-phosphate. The chain is Phosphoglucosamine mutase from Ectopseudomonas mendocina (strain ymp) (Pseudomonas mendocina).